The primary structure comprises 155 residues: MNQVEIYTDGACKGNPGPGGWGVLLRSGPTEKALFGGALGTTNNRMELMAVIEALSALQRPCAVTLYLDSEYVRKGITEWIHGWKAKGWRTAARQPVKNVDLWQRLDALVSTGGHRIEWRWVKGHSGDPGNERADALANRGVDQALGRGALASAE.

The region spanning 1 to 143 (MNQVEIYTDG…ADALANRGVD (143 aa)) is the RNase H type-1 domain. Mg(2+)-binding residues include D9, E47, D69, and D135.

The protein belongs to the RNase H family. Monomer. Mg(2+) is required as a cofactor.

Its subcellular location is the cytoplasm. It catalyses the reaction Endonucleolytic cleavage to 5'-phosphomonoester.. Endonuclease that specifically degrades the RNA of RNA-DNA hybrids. This Verminephrobacter eiseniae (strain EF01-2) protein is Ribonuclease H.